We begin with the raw amino-acid sequence, 159 residues long: MTLSILVAHDLQRVIGFENQLPWHLPNDLKHVKKLSTGHTLVMGRKTFESIGKPLPNRRNVVLTSDTSFNVVGVDVIHSIEDIYQLPGHVFIFGGQILFEEMIDKVDDMYITVIEGKFRGDTFFPPYTFEDWEVASSVEGKLDEKNTIPHTFLHLIRKK.

In terms of domain architecture, DHFR spans 2–157 (TLSILVAHDL…IPHTFLHLIR (156 aa)). Position 6-8 (6-8 (LVA)) interacts with substrate. Residues 7-8 (VA) and 15-20 (IGFENQ) contribute to the NADP(+) site. Aspartate 28 contacts substrate. Residue 44–47 (GRKT) coordinates NADP(+). Arginine 58 provides a ligand contact to substrate. NADP(+) is bound by residues 63 to 66 (LTSD) and 93 to 98 (FGGQIL). Residue threonine 112 coordinates substrate.

The protein belongs to the dihydrofolate reductase family.

The catalysed reaction is (6S)-5,6,7,8-tetrahydrofolate + NADP(+) = 7,8-dihydrofolate + NADPH + H(+). It functions in the pathway cofactor biosynthesis; tetrahydrofolate biosynthesis; 5,6,7,8-tetrahydrofolate from 7,8-dihydrofolate: step 1/1. In terms of biological role, key enzyme in folate metabolism. Catalyzes an essential reaction for de novo glycine and purine synthesis, and for DNA precursor synthesis. In Staphylococcus aureus (strain MW2), this protein is Dihydrofolate reductase (folA).